Reading from the N-terminus, the 515-residue chain is ATP synthase subunit alpha (515 aa).

171 to 178 (GDRQTGKT) provides a ligand contact to ATP.

It belongs to the ATPase alpha/beta chains family. As to quaternary structure, F-type ATPases have 2 components, CF(1) - the catalytic core - and CF(0) - the membrane proton channel. CF(1) has five subunits: alpha(3), beta(3), gamma(1), delta(1), epsilon(1). CF(0) has three main subunits: a(1), b(2) and c(9-12). The alpha and beta chains form an alternating ring which encloses part of the gamma chain. CF(1) is attached to CF(0) by a central stalk formed by the gamma and epsilon chains, while a peripheral stalk is formed by the delta and b chains.

It is found in the cell inner membrane. It catalyses the reaction ATP + H2O + 4 H(+)(in) = ADP + phosphate + 5 H(+)(out). In terms of biological role, produces ATP from ADP in the presence of a proton gradient across the membrane. The alpha chain is a regulatory subunit. The polypeptide is ATP synthase subunit alpha (Xylella fastidiosa (strain 9a5c)).